Here is a 276-residue protein sequence, read N- to C-terminus: Rhomboid protease GlpG (276 aa).

A run of 6 helical transmembrane segments spans residues 94–114 (GPVT…MQIL), 142–162 (ALMH…WYLG), 169–189 (LGSG…GYVQ), 192–212 (FSGP…GYVW), 229–249 (LIIF…GMSM), and 250–270 (ANGA…VDSL). The active-site Nucleophile is the S201. The active site involves H254.

This sequence belongs to the peptidase S54 family.

Its subcellular location is the cell inner membrane. The catalysed reaction is Cleaves type-1 transmembrane domains using a catalytic dyad composed of serine and histidine that are contributed by different transmembrane domains.. Its function is as follows. Rhomboid-type serine protease that catalyzes intramembrane proteolysis. This chain is Rhomboid protease GlpG, found in Shigella flexneri serotype 5b (strain 8401).